Consider the following 417-residue polypeptide: Serine--tRNA ligase (417 aa).

226 to 228 (TSE) provides a ligand contact to L-serine. ATP is bound by residues 257–259 (RRE) and Val-273. Glu-280 provides a ligand contact to L-serine. Residue 344-347 (ELTS) participates in ATP binding. Thr-379 lines the L-serine pocket.

It belongs to the class-II aminoacyl-tRNA synthetase family. Type-1 seryl-tRNA synthetase subfamily. As to quaternary structure, homodimer. The tRNA molecule binds across the dimer.

Its subcellular location is the cytoplasm. The enzyme catalyses tRNA(Ser) + L-serine + ATP = L-seryl-tRNA(Ser) + AMP + diphosphate + H(+). It carries out the reaction tRNA(Sec) + L-serine + ATP = L-seryl-tRNA(Sec) + AMP + diphosphate + H(+). Its pathway is aminoacyl-tRNA biosynthesis; selenocysteinyl-tRNA(Sec) biosynthesis; L-seryl-tRNA(Sec) from L-serine and tRNA(Sec): step 1/1. Catalyzes the attachment of serine to tRNA(Ser). Is also able to aminoacylate tRNA(Sec) with serine, to form the misacylated tRNA L-seryl-tRNA(Sec), which will be further converted into selenocysteinyl-tRNA(Sec). The polypeptide is Serine--tRNA ligase (Mycobacterium sp. (strain JLS)).